A 265-amino-acid polypeptide reads, in one-letter code: MNKDVSLGQPIVRYEDGKLFNTTDQYVTEFPLTIMVNGEEFATVICSPTNLEELVIGFLASEGAILKRDELKSVLIDDSKGFAHVGLNKDLGDRFQYSTKRMIASCCGKSREFYFQNDAAIAKTSMSKITLTPIQIINMMTRLQSASHIYQETGGLHNAAISDGLTFFVHRQDIGRHNALDKLYGFCIQRHITVRDKVLIFSGRISSEILIKAAKIGVGVILSKSAPTTLAVTLANDLNITAVGFIRNGGFNIYSHPERIIDSEQ.

The active-site Cysteine persulfide intermediate is the Cys-107.

The protein belongs to the FdhD family.

Its subcellular location is the cytoplasm. In terms of biological role, required for formate dehydrogenase (FDH) activity. Acts as a sulfur carrier protein that transfers sulfur from IscS to the molybdenum cofactor prior to its insertion into FDH. This Staphylococcus aureus (strain bovine RF122 / ET3-1) protein is Sulfur carrier protein FdhD.